The primary structure comprises 320 residues: Probable cell division protein WhiA (320 aa).

The H-T-H motif DNA-binding region spans 276-310; it reads TLKELGELVSGGKISKSGINHRLRKIDEIAERLRA.

It belongs to the WhiA family.

In terms of biological role, involved in cell division and chromosome segregation. In Geobacillus sp. (strain WCH70), this protein is Probable cell division protein WhiA.